A 211-amino-acid polypeptide reads, in one-letter code: Thiamine-phosphate synthase (211 aa).

4-amino-2-methyl-5-(diphosphooxymethyl)pyrimidine contacts are provided by residues 37-41 (QLRIK) and Asn69. 2 residues coordinate Mg(2+): Asp70 and Asp89. Ser108 is a binding site for 4-amino-2-methyl-5-(diphosphooxymethyl)pyrimidine. 134 to 136 (TQT) is a binding site for 2-[(2R,5Z)-2-carboxy-4-methylthiazol-5(2H)-ylidene]ethyl phosphate. A 4-amino-2-methyl-5-(diphosphooxymethyl)pyrimidine-binding site is contributed by Lys137. Residues Gly166 and 186–187 (VS) each bind 2-[(2R,5Z)-2-carboxy-4-methylthiazol-5(2H)-ylidene]ethyl phosphate.

The protein belongs to the thiamine-phosphate synthase family. It depends on Mg(2+) as a cofactor.

It carries out the reaction 2-[(2R,5Z)-2-carboxy-4-methylthiazol-5(2H)-ylidene]ethyl phosphate + 4-amino-2-methyl-5-(diphosphooxymethyl)pyrimidine + 2 H(+) = thiamine phosphate + CO2 + diphosphate. The catalysed reaction is 2-(2-carboxy-4-methylthiazol-5-yl)ethyl phosphate + 4-amino-2-methyl-5-(diphosphooxymethyl)pyrimidine + 2 H(+) = thiamine phosphate + CO2 + diphosphate. It catalyses the reaction 4-methyl-5-(2-phosphooxyethyl)-thiazole + 4-amino-2-methyl-5-(diphosphooxymethyl)pyrimidine + H(+) = thiamine phosphate + diphosphate. Its pathway is cofactor biosynthesis; thiamine diphosphate biosynthesis; thiamine phosphate from 4-amino-2-methyl-5-diphosphomethylpyrimidine and 4-methyl-5-(2-phosphoethyl)-thiazole: step 1/1. Functionally, condenses 4-methyl-5-(beta-hydroxyethyl)thiazole monophosphate (THZ-P) and 2-methyl-4-amino-5-hydroxymethyl pyrimidine pyrophosphate (HMP-PP) to form thiamine monophosphate (TMP). The polypeptide is Thiamine-phosphate synthase (Salmonella newport (strain SL254)).